The following is a 312-amino-acid chain: Pantothenate kinase (312 aa).

97–104 (GSVAVGKS) serves as a coordination point for ATP.

It belongs to the prokaryotic pantothenate kinase family.

Its subcellular location is the cytoplasm. It carries out the reaction (R)-pantothenate + ATP = (R)-4'-phosphopantothenate + ADP + H(+). It functions in the pathway cofactor biosynthesis; coenzyme A biosynthesis; CoA from (R)-pantothenate: step 1/5. The chain is Pantothenate kinase from Mycolicibacterium smegmatis (strain ATCC 700084 / mc(2)155) (Mycobacterium smegmatis).